The primary structure comprises 214 residues: Dephospho-CoA kinase (214 aa).

The DPCK domain occupies 4-204 (IVGLTGGIGS…QRYLQLAQQK (201 aa)). 12 to 17 (GSGKST) is an ATP binding site.

Belongs to the CoaE family.

It localises to the cytoplasm. The enzyme catalyses 3'-dephospho-CoA + ATP = ADP + CoA + H(+). It functions in the pathway cofactor biosynthesis; coenzyme A biosynthesis; CoA from (R)-pantothenate: step 5/5. Functionally, catalyzes the phosphorylation of the 3'-hydroxyl group of dephosphocoenzyme A to form coenzyme A. The protein is Dephospho-CoA kinase of Mannheimia succiniciproducens (strain KCTC 0769BP / MBEL55E).